The chain runs to 276 residues: Large ribosomal subunit protein uL2 (276 aa).

The segment at 210–276 (GRNRHRGIRP…KLIISRRKGK (67 aa)) is disordered. Over residues 230-240 (DHPHGGGEGKK) the composition is skewed to basic and acidic residues. The segment covering 255 to 276 (KGAKTRRKKASDKLIISRRKGK) has biased composition (basic residues).

The protein belongs to the universal ribosomal protein uL2 family. Part of the 50S ribosomal subunit. Forms a bridge to the 30S subunit in the 70S ribosome.

Functionally, one of the primary rRNA binding proteins. Required for association of the 30S and 50S subunits to form the 70S ribosome, for tRNA binding and peptide bond formation. It has been suggested to have peptidyltransferase activity; this is somewhat controversial. Makes several contacts with the 16S rRNA in the 70S ribosome. This chain is Large ribosomal subunit protein uL2, found in Campylobacter jejuni subsp. jejuni serotype O:6 (strain 81116 / NCTC 11828).